The primary structure comprises 760 residues: UDP-N-acetylmuramoyl-L-alanyl-D-glutamate--2,6-diaminopimelate ligase MurE homolog, chloroplastic (760 aa).

The transit peptide at methionine 1–glutamate 59 directs the protein to the chloroplast. Disordered regions lie at residues proline 13–leucine 159 and leucine 176–glycine 205. Over residues serine 20–arginine 34 the composition is skewed to pro residues. A compositionally biased stretch (acidic residues) spans alanine 53 to glutamate 62. The segment covering glutamate 118 to arginine 132 has biased composition (basic and acidic residues). Composition is skewed to acidic residues over residues proline 150–leucine 159 and alanine 182–glycine 205.

This sequence belongs to the MurCDEF family. MurE subfamily. In terms of assembly, component of the plastid-encoded plastid RNA polymerase (PEP) complex.

It is found in the plastid. It localises to the chloroplast. In terms of biological role, required for the activity of the plastid-encoded RNA polymerase (PEP) and full expression of genes transcribed by PEP. Required for the proper build-up and formation of the PEP-complex. This Zea mays (Maize) protein is UDP-N-acetylmuramoyl-L-alanyl-D-glutamate--2,6-diaminopimelate ligase MurE homolog, chloroplastic.